Reading from the N-terminus, the 319-residue chain is Ribosomal protein L11 methyltransferase (319 aa).

Threonine 165, glycine 186, aspartate 208, and asparagine 251 together coordinate S-adenosyl-L-methionine.

It belongs to the methyltransferase superfamily. PrmA family.

It is found in the cytoplasm. The enzyme catalyses L-lysyl-[protein] + 3 S-adenosyl-L-methionine = N(6),N(6),N(6)-trimethyl-L-lysyl-[protein] + 3 S-adenosyl-L-homocysteine + 3 H(+). Methylates ribosomal protein L11. This chain is Ribosomal protein L11 methyltransferase, found in Limosilactobacillus reuteri subsp. reuteri (strain JCM 1112) (Lactobacillus reuteri).